The primary structure comprises 492 residues: MEHKEIVIGVDLGSRKICAIVAEFKEGILRIIGTAHQDSKEINSKAIKRGRINSLAHASNAIKEVINSAKKMAGLNADEDRNNPMPHFGEYHPKTKAIVSFSGAYTESIRDVTGVASTKDNVVTIDEINRAINSACAKAGLDNDKHILHALPYRFTLDKQEVNDPLGMSGTRLEVFIHIVYTEKNNIENLEKIMIQSGVEIENIVINSYAASIATLSNDERELGVACVDMGGETCNLTIYSGNSIRYNKYLPVGSHHLTTDLSHMLNTPFPYAEEVKIKYGDLSFEGGEETPSQNVQIPTTGSDGHESHIVPLSEIQTIMRERALETFKIIHRSIQDSGLEEHLGGGVVLTGGMALMKGIKELARTHFTNYPVRLAAPVEKYNIMGMFEDLKDPRFSVVVGLILYKAGGHTNYERDSKGVIRYHESDDYTRTAHQSSPTPHIHSSPTERNLSDLKAPSAPLNTAKNDDFLPIKPTEQKGFFKSFLDKISKFF.

Disordered regions lie at residues 288 to 307 and 429 to 458; these read GEET…DGHE and YTRT…KAPS. A compositionally biased stretch (polar residues) spans 291–303; the sequence is TPSQNVQIPTTGS. The span at 436 to 447 shows a compositional bias: low complexity; the sequence is SSPTPHIHSSPT.

The protein belongs to the FtsA/MreB family. In terms of assembly, self-interacts. Interacts with FtsZ.

Its subcellular location is the cell inner membrane. Its function is as follows. Cell division protein that is involved in the assembly of the Z ring. May serve as a membrane anchor for the Z ring. In Helicobacter pylori (strain ATCC 700392 / 26695) (Campylobacter pylori), this protein is Cell division protein FtsA.